Reading from the N-terminus, the 132-residue chain is MQTQIKVRGYHLDVYQHVNNARYLEFLEEARWDGLENSDSFQWMTAHNIAFVVVNININYRRPAVLSDLLTITSQLQQLNGKSGILSQVITLEPEGQVVADALITFVCIDLKTQKALALEGELREKLEQMVK.

The active site involves D13.

It belongs to the 4-hydroxybenzoyl-CoA thioesterase family. In terms of assembly, homotetramer.

The catalysed reaction is (3E,5Z)-tetradecadienoyl-CoA + H2O = (3E,5Z)-tetradecadienoate + CoA + H(+). The enzyme catalyses (3E,5Z)-dodecadienoyl-CoA + H2O = (3E,5Z)-dodecadienoate + CoA + H(+). It carries out the reaction (9Z)-octadecenoyl-CoA + H2O = (9Z)-octadecenoate + CoA + H(+). It catalyses the reaction octadecanoyl-CoA + H2O = octadecanoate + CoA + H(+). The catalysed reaction is hexadecanoyl-CoA + H2O = hexadecanoate + CoA + H(+). The enzyme catalyses (3S)-hydroxytetradecanoyl-CoA + H2O = (3S)-hydroxytetradecanoate + CoA + H(+). It carries out the reaction tetradecanoyl-CoA + H2O = tetradecanoate + CoA + H(+). Functionally, long-chain acyl-CoA thioesterase that could be involved in beta-oxidation of fatty acids. Is most active with 3,5-tetradecadienoyl-CoA, a metabolite of oleic acid that is hydrolyzed during oleate beta-oxidation, but can also use other substrates such as 3,5-dodecadienoyl-CoA, 9-cis-octadecenoyl-CoA, octadecanoyl-CoA, hexadecanoyl-CoA, 3-hydroxytetradecanoyl-CoA and tetradecanoyl-CoA. The sequence is that of Long-chain acyl-CoA thioesterase FadM from Escherichia coli (strain K12).